The chain runs to 295 residues: 3-hydroxy-5-phosphonooxypentane-2,4-dione thiolase (295 aa).

Residue lysine 203 is the Schiff-base intermediate with substrate of the active site.

This sequence belongs to the DeoC/FbaB aldolase family. In terms of assembly, homodecamer.

Its subcellular location is the cytoplasm. It carries out the reaction dihydroxyacetone phosphate + acetyl-CoA = 3-hydroxy-2,4-dioxopentyl phosphate + CoA. Involved in the degradation of phospho-AI-2, thereby terminating induction of the lsr operon and closing the AI-2 signaling cycle. Catalyzes the transfer of an acetyl moiety from 3-hydroxy-5-phosphonooxypentane-2,4-dione to CoA to form glycerone phosphate and acetyl-CoA. This Enterobacter sp. (strain 638) protein is 3-hydroxy-5-phosphonooxypentane-2,4-dione thiolase.